We begin with the raw amino-acid sequence, 35 residues long: Photosystem II reaction center protein T (35 aa).

The chain crosses the membrane as a helical span at residues 3-23; the sequence is ALVYTFLLVSTLGIIFFAIFF.

This sequence belongs to the PsbT family. In terms of assembly, PSII is composed of 1 copy each of membrane proteins PsbA, PsbB, PsbC, PsbD, PsbE, PsbF, PsbH, PsbI, PsbJ, PsbK, PsbL, PsbM, PsbT, PsbY, PsbZ, Psb30/Ycf12, at least 3 peripheral proteins of the oxygen-evolving complex and a large number of cofactors. It forms dimeric complexes.

It is found in the plastid. The protein localises to the chloroplast thylakoid membrane. In terms of biological role, found at the monomer-monomer interface of the photosystem II (PS II) dimer, plays a role in assembly and dimerization of PSII. PSII is a light-driven water plastoquinone oxidoreductase, using light energy to abstract electrons from H(2)O, generating a proton gradient subsequently used for ATP formation. This Asarum canadense (Wild ginger) protein is Photosystem II reaction center protein T.